We begin with the raw amino-acid sequence, 191 residues long: GDP-mannose pyrophosphatase (191 aa).

GDP-alpha-D-mannose contacts are provided by residues Tyr17, 38-40 (KRE), Arg67, and 85-87 (AGL). The Nudix hydrolase domain occupies 43–180 (DRGNGATILL…EIRDGKTVLL (138 aa)). 3 residues coordinate Mg(2+): Ala85, Glu100, and Glu104. Positions 86–106 (GLLDNDEPEVCIRKEAIEETG) match the Nudix box motif. Residues Glu104, Glu127, 150–151 (DE), and Lys176 each bind GDP-alpha-D-mannose. Glu151 provides a ligand contact to Mg(2+).

This sequence belongs to the Nudix hydrolase family. NudK subfamily. In terms of assembly, homodimer. Requires Mg(2+) as cofactor.

The catalysed reaction is GDP-alpha-D-mannose + H2O = alpha-D-mannose 1-phosphate + GMP + 2 H(+). Functionally, nucleoside diphosphate sugar hydrolase that hydrolyzes GDP-mannose as its preferred substrate, yielding GMP and mannose-1-phosphate. This Salmonella arizonae (strain ATCC BAA-731 / CDC346-86 / RSK2980) protein is GDP-mannose pyrophosphatase (nudK).